A 623-amino-acid polypeptide reads, in one-letter code: Glutamyl-tRNA(Gln) amidotransferase subunit E (623 aa).

The protein belongs to the GatB/GatE family. GatE subfamily. In terms of assembly, heterodimer of GatD and GatE.

It carries out the reaction L-glutamyl-tRNA(Gln) + L-glutamine + ATP + H2O = L-glutaminyl-tRNA(Gln) + L-glutamate + ADP + phosphate + H(+). Functionally, allows the formation of correctly charged Gln-tRNA(Gln) through the transamidation of misacylated Glu-tRNA(Gln) in organisms which lack glutaminyl-tRNA synthetase. The reaction takes place in the presence of glutamine and ATP through an activated gamma-phospho-Glu-tRNA(Gln). The GatDE system is specific for glutamate and does not act on aspartate. The sequence is that of Glutamyl-tRNA(Gln) amidotransferase subunit E from Haloarcula marismortui (strain ATCC 43049 / DSM 3752 / JCM 8966 / VKM B-1809) (Halobacterium marismortui).